We begin with the raw amino-acid sequence, 120 residues long: NAD(P)H-quinone oxidoreductase subunit 3, chloroplastic (120 aa).

Transmembrane regions (helical) follow at residues 9 to 29 (IFWAFLIISSLIPILAFFISG), 64 to 84 (MFALVFVVFDVETVFLYPWAM), and 88 to 108 (VLGLSVFLEAFVFVLILIVGL).

It belongs to the complex I subunit 3 family. In terms of assembly, NDH is composed of at least 16 different subunits, 5 of which are encoded in the nucleus.

Its subcellular location is the plastid. The protein localises to the chloroplast thylakoid membrane. It carries out the reaction a plastoquinone + NADH + (n+1) H(+)(in) = a plastoquinol + NAD(+) + n H(+)(out). It catalyses the reaction a plastoquinone + NADPH + (n+1) H(+)(in) = a plastoquinol + NADP(+) + n H(+)(out). Its function is as follows. NDH shuttles electrons from NAD(P)H:plastoquinone, via FMN and iron-sulfur (Fe-S) centers, to quinones in the photosynthetic chain and possibly in a chloroplast respiratory chain. The immediate electron acceptor for the enzyme in this species is believed to be plastoquinone. Couples the redox reaction to proton translocation, and thus conserves the redox energy in a proton gradient. The sequence is that of NAD(P)H-quinone oxidoreductase subunit 3, chloroplastic from Jasminum nudiflorum (Winter jasmine).